A 417-amino-acid polypeptide reads, in one-letter code: L-rhamnose isomerase (417 aa).

H260, D292, and D294 together coordinate Mn(2+).

This sequence belongs to the rhamnose isomerase family. Mn(2+) serves as cofactor.

It is found in the cytoplasm. The enzyme catalyses L-rhamnopyranose = L-rhamnulose. Its pathway is carbohydrate degradation; L-rhamnose degradation; glycerone phosphate from L-rhamnose: step 1/3. Its function is as follows. Catalyzes the interconversion of L-rhamnose and L-rhamnulose. The sequence is that of L-rhamnose isomerase from Mannheimia succiniciproducens (strain KCTC 0769BP / MBEL55E).